The sequence spans 444 residues: 3-phosphoshikimate 1-carboxyvinyltransferase (444 aa).

3 residues coordinate 3-phosphoshikimate: K24, S25, and R29. Residue K24 coordinates phosphoenolpyruvate. Residues G97 and R125 each coordinate phosphoenolpyruvate. 3-phosphoshikimate is bound by residues S170, Q172, D318, and K345. Q172 is a phosphoenolpyruvate binding site. The active-site Proton acceptor is the D318. The phosphoenolpyruvate site is built by R349 and R391.

Belongs to the EPSP synthase family. Monomer.

Its subcellular location is the cytoplasm. It catalyses the reaction 3-phosphoshikimate + phosphoenolpyruvate = 5-O-(1-carboxyvinyl)-3-phosphoshikimate + phosphate. It participates in metabolic intermediate biosynthesis; chorismate biosynthesis; chorismate from D-erythrose 4-phosphate and phosphoenolpyruvate: step 6/7. In terms of biological role, catalyzes the transfer of the enolpyruvyl moiety of phosphoenolpyruvate (PEP) to the 5-hydroxyl of shikimate-3-phosphate (S3P) to produce enolpyruvyl shikimate-3-phosphate and inorganic phosphate. This chain is 3-phosphoshikimate 1-carboxyvinyltransferase, found in Halorhodospira halophila (strain DSM 244 / SL1) (Ectothiorhodospira halophila (strain DSM 244 / SL1)).